The sequence spans 201 residues: Small ribosomal subunit protein uS4c (201 aa).

The S4 RNA-binding domain occupies 89–149 (MRLDNILFRL…DKPKSGALIK (61 aa)).

It belongs to the universal ribosomal protein uS4 family. As to quaternary structure, part of the 30S ribosomal subunit. Contacts protein S5. The interaction surface between S4 and S5 is involved in control of translational fidelity.

Its subcellular location is the plastid. Functionally, one of the primary rRNA binding proteins, it binds directly to 16S rRNA where it nucleates assembly of the body of the 30S subunit. With S5 and S12 plays an important role in translational accuracy. This is Small ribosomal subunit protein uS4c (rps4) from Cuscuta exaltata (Tall dodder).